A 107-amino-acid chain; its full sequence is Small ribosomal subunit protein uS17 (107 aa).

Belongs to the universal ribosomal protein uS17 family. In terms of assembly, part of the 30S ribosomal subunit.

In terms of biological role, one of the primary rRNA binding proteins, it binds specifically to the 5'-end of 16S ribosomal RNA. In Aquifex aeolicus (strain VF5), this protein is Small ribosomal subunit protein uS17.